The following is a 239-amino-acid chain: Mannose-P-dolichol utilization defect 1 protein homolog 1 (239 aa).

The next 6 membrane-spanning stretches (helical) occupy residues 25–45 (CLLP…SMTV), 62–82 (LSVV…AYCL), 91–111 (FGEL…IYYF), 123–143 (AILY…PFLF), 174–194 (LSFL…FTSI), and 202–222 (MLLG…QILL). The PQ-loop 1 domain occupies 27–93 (LPLISKLLGY…KDLPFSAFGE (67 aa)). The 56-residue stretch at 150 to 205 (KHLIFLSARIPQIWKNFRNKSTGQLSFLTCLMNFGGALARVFTSIQEKAPLSMLLG) folds into the PQ-loop 2 domain.

It belongs to the MPDU1 (TC 2.A.43.3) family.

The protein localises to the membrane. The chain is Mannose-P-dolichol utilization defect 1 protein homolog 1 from Arabidopsis thaliana (Mouse-ear cress).